A 356-amino-acid polypeptide reads, in one-letter code: Carbohydrate sulfotransferase 10 (356 aa).

Residues 1–6 (MHHQWL) lie on the Cytoplasmic side of the membrane. A helical; Signal-anchor for type II membrane protein membrane pass occupies residues 7-27 (LLAACFWVIFMFMVASKFITL). Residues 28 to 356 (TFKDPDGYSA…GYQKPDFLLN (329 aa)) lie on the Lumenal side of the membrane. N-linked (GlcNAc...) asparagine glycosylation is present at N99. 3'-phosphoadenylyl sulfate-binding positions include 127-133 (PKVGNTQ) and 189-197 (RDPFERLIS). N-linked (GlcNAc...) asparagine glycosylation is found at N228 and N316.

Belongs to the sulfotransferase 2 family.

The protein localises to the golgi apparatus membrane. It catalyses the reaction 3-O-{beta-D-GlcA-(1-&gt;[3)-alpha-D-Xyl-(1-&gt;3)-beta-D-GlcA-(1-&gt;](n)-4)-beta-D-Xyl-(1-&gt;4)-Rib-ol-P-Rib-ol-P-3-beta-D-GalNAc-(1-&gt;3)-beta-D-GlcNAc-(1-&gt;4)-O-6-P-alpha-D-Man}-L-Thr-[protein] + 3'-phosphoadenylyl sulfate = 3-O-{O-3-S-beta-D-GlcA-(1-&gt;[3)-alpha-D-Xyl-(1-&gt;3)-beta-D-GlcA-(1-&gt;](n)-4)-beta-D-Xyl-(1-&gt;4)-Rib-ol-P-Rib-ol-P-3-beta-D-GalNAc-(1-&gt;3)-beta-D-GlcNAc-(1-&gt;4)-O-6-P-alpha-D-Man}-L-Thr-[protein] + adenosine 3',5'-bisphosphate + H(+). It carries out the reaction 17beta-estradiol 3-O-(beta-D-glucuronate) + 3'-phosphoadenylyl sulfate = 17beta-estradiol 3-O-(3-sulfo-beta-D-glucuronate) + adenosine 3',5'-bisphosphate + H(+). The enzyme catalyses 17beta-estradiol 3-O-(beta-D-glucuronate) 17-sulfate + 3'-phosphoadenylyl sulfate = 17beta-estradiol 3-O-(3-sulfo-beta-D-glucuronate) 17-sulfate + adenosine 3',5'-bisphosphate + H(+). The catalysed reaction is 17beta-estradiol 17-O-(beta-D-glucuronate) + 3'-phosphoadenylyl sulfate = 17beta-estradiol 17-O-(3-sulfo-beta-D-glucuronate) + adenosine 3',5'-bisphosphate + H(+). It catalyses the reaction 16alpha,17beta-estriol 3-O-(beta-D-glucuronate) + 3'-phosphoadenylyl sulfate = 16alpha,17beta-estriol 3-O-(3-sulfo-beta-D-glucuronate) + adenosine 3',5'-bisphosphate + H(+). It carries out the reaction 16alpha,17beta-estriol 16-O-(beta-D-glucuronate) + 3'-phosphoadenylyl sulfate = 16alpha,17beta-estriol 16-O-(3-sulfo-beta-D-glucuronate) + adenosine 3',5'-bisphosphate + H(+). The enzyme catalyses 16alpha,17beta-estriol 17-O-(beta-D-glucuronate) + 3'-phosphoadenylyl sulfate = 16alpha,17beta-estriol 17-O-(3-sulfo-beta-D-glucuronate) + adenosine 3',5'-bisphosphate + H(+). The catalysed reaction is estrone 3-O-(beta-D-glucuronate) + 3'-phosphoadenylyl sulfate = estrone 3-O-(3-sulfo-beta-D-glucuronate) + adenosine 3',5'-bisphosphate + H(+). It catalyses the reaction 3alpha,20alpha-dihydroxy-5beta-pregnane 3-O-(beta-D-glucuronate) + 3'-phosphoadenylyl sulfate = 3alpha,20alpha-dihydroxy-5beta-pregnane 3-O-(3-sulfo-beta-D-glucuronate) + adenosine 3',5'-bisphosphate + H(+). It carries out the reaction testosterone 17-O-(beta-D-glucuronate) + 3'-phosphoadenylyl sulfate = testosterone 17-O-(3-sulfo-beta-D-glucuronate) + adenosine 3',5'-bisphosphate + H(+). The enzyme catalyses 3beta-androst-5-en-17-one 3-O-(beta-D-glucuronate) + 3'-phosphoadenylyl sulfate = 3beta-androst-5-en-17-one 3-O-(3-sulfo-beta-D-glucuronate) + adenosine 3',5'-bisphosphate + H(+). The catalysed reaction is 3alpha,17alpha-dihydroxy-5beta-androstane-11-one-17beta-carboxylate 3-O-(beta-D-glucuronate) + 3'-phosphoadenylyl sulfate = 3alpha,17alpha-dihydroxy-5beta-androstane-11-one-17beta-carboxylate 3-O-(3-sulfo-beta-D-glucuronate) + adenosine 3',5'-bisphosphate + H(+). It catalyses the reaction 3alpha-hydroxyetiocholan-17-one 3-O-(beta-D-glucuronate) + 3'-phosphoadenylyl sulfate = 3alpha-hydroxyetiocholan-17-one 3-O-(3-sulfo-beta-D-glucuronate) + adenosine 3',5'-bisphosphate + H(+). The protein operates within steroid metabolism. It participates in protein modification; carbohydrate sulfation. Its function is as follows. Catalyzes the transfer of sulfate from 3'-phosphoadenylyl sulfate (PAPS) to position 3 of terminal glucuronic acid of both protein- and lipid-linked oligosaccharides. Participates in biosynthesis of HNK-1 carbohydrate structure 3-O-sulfo-beta-D-GlcA-(1-&gt;3)-beta-D-Gal-(1-&gt;4)-D-GlcNAc-R, a sulfated glucuronyl-lactosaminyl residue carried by many neural recognition molecules, which is involved in cell interactions during ontogenetic development and in synaptic plasticity in the adult. May be indirectly involved in synapse plasticity of the hippocampus, via its role in HNK-1 biosynthesis. Sulfates terminal glucuronyl residue of the laminin globular (LG)-domain binding epitope on DAG1/alpha-dystroglycan and prevents further polymerization by LARGE1 glycosyltransferase. Likely defines the chain length of LG epitope, conferring binding specificity to extracellular matrix components. Plays a role in down-regulating the steroid hormones. Sulfates glucuronidated estrogens and androgens with an impact in hormone cycle and fertility. Has a preference for glucuronyl moiety at the 3-hydroxyl group of a sterol ring rather than the 17-hydroxyl group, showing high catalytic efficiency for 17beta-estradiol 3-O-(beta-D-glucuronate) and dehydroepiandrosterone 3-O-(beta-D-glucuronate) hormones. In Mus musculus (Mouse), this protein is Carbohydrate sulfotransferase 10.